Here is a 1624-residue protein sequence, read N- to C-terminus: ATP-binding cassette sub-family A member 6 (1624 aa).

The chain crosses the membrane as a helical span at residues 31–51 (LLEWSIPIIIGLHMGLFSYLA). 2 N-linked (GlcNAc...) asparagine glycosylation sites follow: asparagine 84 and asparagine 91. 6 helical membrane-spanning segments follow: residues 222 to 242 (IFIL…SSNV), 267 to 287 (WGLI…IIIT), 297 to 317 (FLVI…VTFL), 326 to 346 (VLTN…GFTV), 356 to 376 (EWVL…KVIF), and 395 to 415 (VMIA…VLAL). An ABC transporter 1 domain is found at 478 to 713 (IRIRNIKKEY…WGLGYHLSLF (236 aa)). ATP is bound at residue 514 to 521 (GHSGAGKS). Asparagine 576 is a glycosylation site (N-linked (GlcNAc...) asparagine). Transmembrane regions (helical) follow at residues 854 to 874 (AFLI…IEYV), 971 to 991 (LHCF…MLNH), 1005 to 1025 (FIVL…CVIC), 1058 to 1078 (WCGQ…TSYF), 1094 to 1114 (IVFS…FLTY), 1130 to 1150 (WSIC…NGPF), 1154 to 1174 (LVIS…LVVL), and 1194 to 1214 (AVDL…IFVL). The ABC transporter 2 domain occupies 1282–1520 (LHKEYAGQKK…FGQDYVLELR (239 aa)). An ATP-binding site is contributed by 1320–1327 (GPDGAGKS).

This sequence belongs to the ABC transporter superfamily. ABCA family. In terms of tissue distribution, widely expressed with higher expression in heart, lung, brain, spleen and testis.

Its subcellular location is the golgi apparatus membrane. Functionally, probable transporter which may play a role in macrophage lipid transport and homeostasis. The sequence is that of ATP-binding cassette sub-family A member 6 (Abca6) from Mus musculus (Mouse).